A 420-amino-acid chain; its full sequence is L-rhamnose isomerase (420 aa).

Residues His264, Asp296, and Asp298 each contribute to the Mn(2+) site.

It belongs to the rhamnose isomerase family. Requires Mn(2+) as cofactor.

It localises to the cytoplasm. It catalyses the reaction L-rhamnopyranose = L-rhamnulose. It participates in carbohydrate degradation; L-rhamnose degradation; glycerone phosphate from L-rhamnose: step 1/3. Its function is as follows. Catalyzes the interconversion of L-rhamnose and L-rhamnulose. This is L-rhamnose isomerase from Listeria monocytogenes serotype 4b (strain F2365).